Consider the following 571-residue polypeptide: MSTPGSSRSIPFKSKKRLVMDSPSSKSQTGNPNPSSVALPTPEKPLENMLSRSRNRSVALSVKEIRQAAGSRRRSEDPVASSAKSRLFFDSSSSSPSKRKSSNKNAEKEKLPEKYENLGKFFEALDNSMLLSKLRGSKPTFSNISKQIEHLTERRFCYSHLAQIKHILPEAIEIKRVLIHDETTCCMKPDLHVTLNADAVEYNDKSKSESKKIALRKVFRARLADFVKAHPQGDEVPEEPLPEPFNRRKPVENSNVEVKRVSSLMEEMASIPASKLFSSPITSTPVKTTSSLAKPTSSQINIAPTPTKPTSTPAKQTLSEINILPTPVKPVSTLAKFPSTPAIIDSTPVITATPPEFASTPARLMSTSLAARPLKRSNGHTNPDDISADPPTKLVRRSLSLNFDSYPEDERTMDFTDDIPIDQVPEEDVSSDDEILSILPDKLRHAIKEQERKAIEDQNPAISLAKRRRKMIACLPKLFNVIHYLIQSIRRWVITKEELVHKIIAGHSDITDRKEVEEQLILLQEIVPEWMSEKKSSSGDVLVCINKLASPLTIRSRLEEENKQEMAPLLS.

Residues 1–79 constitute a chloroplast transit peptide; the sequence is MSTPGSSRSI…GSRRRSEDPV (79 aa). Disordered regions lie at residues 1-110 and 288-315; these read MSTP…EKEK and TTSSLAKPTSSQINIAPTPTKPTSTPAK. Residues 22–38 show a composition bias toward polar residues; that stretch reads SPSSKSQTGNPNPSSVA. Low complexity predominate over residues 81–96; that stretch reads SSAKSRLFFDSSSSSP. The segment covering 288-302 has biased composition (polar residues); sequence TTSSLAKPTSSQINI. The segment covering 303–315 has biased composition (low complexity); that stretch reads APTPTKPTSTPAK.

The protein belongs to the Cdt1 family. As to quaternary structure, binds to ARC6. In terms of processing, phosphorylated by cyclin D- and cyclin A-containing CDKA-1, and thus targeted to proteasome-mediated proteolysis. Expressed in proliferating (e.g. shoot and root apical meristems, organ primordia) and endoreplicating cells (e.g. guard cells and stomatal lineage, developing trichomes).

It is found in the plastid. The protein localises to the chloroplast. In terms of biological role, member of the pre-replication complex. Component of the plastid division machinery. Promotes polyloidization and regulates endoreduplication. Involved in the coordination of cell and plastid division. The polypeptide is CDT1-like protein a, chloroplastic (CDT1A) (Arabidopsis thaliana (Mouse-ear cress)).